A 313-amino-acid chain; its full sequence is Glyoxylate/hydroxypyruvate reductase A (313 aa).

Arginine 228 is a catalytic residue. Histidine 276 serves as the catalytic Proton donor.

This sequence belongs to the D-isomer specific 2-hydroxyacid dehydrogenase family. GhrA subfamily.

It localises to the cytoplasm. The enzyme catalyses glycolate + NADP(+) = glyoxylate + NADPH + H(+). It carries out the reaction (R)-glycerate + NAD(+) = 3-hydroxypyruvate + NADH + H(+). It catalyses the reaction (R)-glycerate + NADP(+) = 3-hydroxypyruvate + NADPH + H(+). Functionally, catalyzes the NADPH-dependent reduction of glyoxylate and hydroxypyruvate into glycolate and glycerate, respectively. The protein is Glyoxylate/hydroxypyruvate reductase A of Yersinia enterocolitica serotype O:8 / biotype 1B (strain NCTC 13174 / 8081).